The primary structure comprises 144 residues: MSLHSLCVPTILLISVLSICLSSGGSSDSKLHRILIKRDAKEIESRPKAYISVQQSKAKEFLSGLHRTKRNVWDRSRPDVQQWIQQFMYMGYDEARLETDLSYWMDQARSNDQGRQHHHDENAPMSQQDPRYNRHGANVNYDYY.

Positions M1–S18 are cleaved as a signal peptide. Residues I19 to T68 constitute a propeptide that is removed on maturation. The disordered stretch occupies residues R109–Y144. Over residues D112–N122 the composition is skewed to basic and acidic residues.

It belongs to the augurin family.

It is found in the secreted. The protein resides in the cytoplasm. Its subcellular location is the apical cell membrane. Its function is as follows. Probable hormone. Required for the proper formation of the central nervous system by attenuating cell proliferation during development. In Danio rerio (Zebrafish), this protein is Augurin-B.